A 359-amino-acid polypeptide reads, in one-letter code: Phospho-N-acetylmuramoyl-pentapeptide-transferase (359 aa).

The next 10 helical transmembrane spans lie at 3–23, 55–75, 80–100, 117–137, 156–176, 187–207, 231–251, 255–275, 280–300, and 334–354; these read QIMIAVAIAVAVSILLTPALI, VAILAGIWAGYFGTHLAGLAF, ITASGLLVLGLATSLGGVGFL, TAKTVGQITSAVLFAVLVLQF, IATVTLTPALFVLFCVLVVSA, LDGLAAGCMAMVTGAYVLITF, LALIAAATAGACIGFLWWNAA, IFMGDTGSLALGGIIAGLSVT, ILAVVLGALFVAEITSVVLQI, and FWLLTAITCGLGVALFYGEWL.

The protein belongs to the glycosyltransferase 4 family. MraY subfamily. The cofactor is Mg(2+).

The protein localises to the cell membrane. The enzyme catalyses UDP-N-acetyl-alpha-D-muramoyl-L-alanyl-gamma-D-glutamyl-meso-2,6-diaminopimeloyl-D-alanyl-D-alanine + di-trans,octa-cis-undecaprenyl phosphate = di-trans,octa-cis-undecaprenyl diphospho-N-acetyl-alpha-D-muramoyl-L-alanyl-D-glutamyl-meso-2,6-diaminopimeloyl-D-alanyl-D-alanine + UMP. It functions in the pathway cell wall biogenesis; peptidoglycan biosynthesis. In terms of biological role, catalyzes the initial step of the lipid cycle reactions in the biosynthesis of the cell wall peptidoglycan: transfers peptidoglycan precursor phospho-MurNAc-pentapeptide from UDP-MurNAc-pentapeptide onto the lipid carrier undecaprenyl phosphate, yielding undecaprenyl-pyrophosphoryl-MurNAc-pentapeptide, known as lipid I. The protein is Phospho-N-acetylmuramoyl-pentapeptide-transferase of Mycobacterium ulcerans (strain Agy99).